We begin with the raw amino-acid sequence, 360 residues long: 1-aminocyclopropane-1-carboxylate oxidase homolog 6 (360 aa).

A Fe2OG dioxygenase domain is found at lysine 208 to serine 309. Histidine 232, aspartate 234, and histidine 288 together coordinate Fe cation. Residue arginine 299 participates in 2-oxoglutarate binding.

Belongs to the iron/ascorbate-dependent oxidoreductase family. It depends on Fe(2+) as a cofactor. In terms of tissue distribution, constitutively expressed in leaves and blades.

The polypeptide is 1-aminocyclopropane-1-carboxylate oxidase homolog 6 (Arabidopsis thaliana (Mouse-ear cress)).